A 387-amino-acid polypeptide reads, in one-letter code: 1-hydroxy-2-naphthoate 1,2-dioxygenasee (387 aa).

2 Cupin type-2 domains span residues 103–171 and 271–337; these read FQLV…VWLD and VQRL…VLLF.

Homohexamer. It depends on Fe(2+) as a cofactor.

It carries out the reaction 1-hydroxy-2-naphthoate + O2 = (3Z)-4-(2-carboxyphenyl)-2-oxobut-3-enoate + H(+). Dioxygenase involved in phenanthrene catabolism by mediating cleavage of 1-hydroxy-2-naphthoate. The sequence is that of 1-hydroxy-2-naphthoate 1,2-dioxygenasee (phdI) from Nocardioides sp. (strain KP7).